Reading from the N-terminus, the 545-residue chain is CTP synthase (545 aa).

The tract at residues methionine 1–methionine 267 is amidoligase domain. Serine 13 contributes to the CTP binding site. Serine 13 serves as a coordination point for UTP. ATP is bound by residues serine 14–isoleucine 19 and aspartate 71. Residues aspartate 71 and glutamate 141 each contribute to the Mg(2+) site. Residues aspartate 148–glutamate 150, lysine 188–glutamine 193, and lysine 224 each bind CTP. UTP-binding positions include lysine 188–glutamine 193 and lysine 224. The Glutamine amidotransferase type-1 domain maps to glutamate 292–serine 534. Glycine 354 serves as a coordination point for L-glutamine. The active-site Nucleophile; for glutamine hydrolysis is cysteine 381. L-glutamine contacts are provided by residues leucine 382–glutamine 385, glutamate 405, and arginine 462. Catalysis depends on residues histidine 507 and glutamate 509.

It belongs to the CTP synthase family. In terms of assembly, homotetramer.

It carries out the reaction UTP + L-glutamine + ATP + H2O = CTP + L-glutamate + ADP + phosphate + 2 H(+). The enzyme catalyses L-glutamine + H2O = L-glutamate + NH4(+). It catalyses the reaction UTP + NH4(+) + ATP = CTP + ADP + phosphate + 2 H(+). It functions in the pathway pyrimidine metabolism; CTP biosynthesis via de novo pathway; CTP from UDP: step 2/2. Allosterically activated by GTP, when glutamine is the substrate; GTP has no effect on the reaction when ammonia is the substrate. The allosteric effector GTP functions by stabilizing the protein conformation that binds the tetrahedral intermediate(s) formed during glutamine hydrolysis. Inhibited by the product CTP, via allosteric rather than competitive inhibition. Functionally, catalyzes the ATP-dependent amination of UTP to CTP with either L-glutamine or ammonia as the source of nitrogen. Regulates intracellular CTP levels through interactions with the four ribonucleotide triphosphates. The protein is CTP synthase of Nostoc punctiforme (strain ATCC 29133 / PCC 73102).